The sequence spans 298 residues: 33 kDa chaperonin (298 aa).

Disulfide bonds link Cys239/Cys241 and Cys272/Cys275.

Belongs to the HSP33 family. Post-translationally, under oxidizing conditions two disulfide bonds are formed involving the reactive cysteines. Under reducing conditions zinc is bound to the reactive cysteines and the protein is inactive.

It is found in the cytoplasm. Redox regulated molecular chaperone. Protects both thermally unfolding and oxidatively damaged proteins from irreversible aggregation. Plays an important role in the bacterial defense system toward oxidative stress. The polypeptide is 33 kDa chaperonin (Picosynechococcus sp. (strain ATCC 27264 / PCC 7002 / PR-6) (Agmenellum quadruplicatum)).